The primary structure comprises 1227 residues: Protein transport protein Sec31A (1227 aa).

WD repeat units follow at residues 4–47 (KEID…EIFE), 64–111 (SSAH…AGDT), 120–160 (KHTG…TPMT), 166–206 (QPLE…PIIK), 209–254 (DHNN…SPLR), 258–298 (SHTR…VLYE), and 301–342 (TNMQ…DGLR). The stretch at 397–430 (SFSFGGKLVTFENAKPQQQPGIDQQPQHHYVYVS) is one WD 8; interaction with SEC13 repeat. Disordered stretches follow at residues 804-875 (EAIK…YSQA), 905-1008 (QPVA…GWND), and 1040-1075 (ADPQAQMQQPPAAPVGTPSFQPQQLSTGQQAPLGPY). Over residues 905–924 (QPVAAPASASYPSPASNTNP) the composition is skewed to low complexity. The segment covering 925–945 (PYLPAAQPVPSPLYPGQPQPS) has biased composition (pro residues). Polar residues predominate over residues 995-1006 (PASQRTGPQNGW). Over residues 1040 to 1049 (ADPQAQMQQP) the composition is skewed to low complexity. Over residues 1057 to 1069 (PSFQPQQLSTGQQ) the composition is skewed to polar residues.

It belongs to the WD repeat SEC31 family. In terms of assembly, COPII is composed of at least 5 proteins: the SEC23/24 complex, the SEC13/31 complex and SAR1. SEC13 and SEC31 make a 2:2 tetramer that forms the edge element of the COPII outer coat. The tetramer self-assembles in multiple copies to form the complete polyhedral cage. Interacts (via WD 8) with SEC13.

It localises to the cytoplasm. Its subcellular location is the cytoplasmic vesicle. It is found in the COPII-coated vesicle membrane. The protein localises to the endoplasmic reticulum membrane. Its function is as follows. Component of the coat protein complex II (COPII) which promotes the formation of transport vesicles from the endoplasmic reticulum (ER). The coat has two main functions, the physical deformation of the endoplasmic reticulum membrane into vesicles and the selection of cargo molecules. The sequence is that of Protein transport protein Sec31A (SEC31A) from Gallus gallus (Chicken).